A 124-amino-acid chain; its full sequence is UPF0538 protein (124 aa).

It belongs to the UPF0538 family.

This chain is UPF0538 protein, found in Dictyostelium discoideum (Social amoeba).